We begin with the raw amino-acid sequence, 69 residues long: UPF0150 protein AF_1072 (69 aa).

The protein belongs to the UPF0150 family.

The sequence is that of UPF0150 protein AF_1072 from Archaeoglobus fulgidus (strain ATCC 49558 / DSM 4304 / JCM 9628 / NBRC 100126 / VC-16).